The primary structure comprises 950 residues: Protein translocase subunit SecA (950 aa).

ATP-binding positions include glutamine 87, 105–109 (GEGKT), and aspartate 524. The interval 908–932 (GAAPVPAEARNPNDPSTWGKVGRNE) is disordered. Positions 934, 936, 945, and 946 each coordinate Zn(2+).

Belongs to the SecA family. In terms of assembly, monomer and homodimer. Part of the essential Sec protein translocation apparatus which comprises SecA, SecYEG and auxiliary proteins SecDF-YajC and YidC. Requires Zn(2+) as cofactor.

It localises to the cell inner membrane. Its subcellular location is the cytoplasm. The enzyme catalyses ATP + H2O + cellular proteinSide 1 = ADP + phosphate + cellular proteinSide 2.. Part of the Sec protein translocase complex. Interacts with the SecYEG preprotein conducting channel. Has a central role in coupling the hydrolysis of ATP to the transfer of proteins into and across the cell membrane, serving both as a receptor for the preprotein-SecB complex and as an ATP-driven molecular motor driving the stepwise translocation of polypeptide chains across the membrane. In Bradyrhizobium sp. (strain BTAi1 / ATCC BAA-1182), this protein is Protein translocase subunit SecA.